The primary structure comprises 203 residues: Recombination protein RecR (203 aa).

The C4-type zinc-finger motif lies at 57–72 (CARCNTFSETELCVLC). In terms of domain architecture, Toprim spans 80 to 175 (DVLCVVEMPA…SVSRIARGLP (96 aa)).

Belongs to the RecR family.

In terms of biological role, may play a role in DNA repair. It seems to be involved in an RecBC-independent recombinational process of DNA repair. It may act with RecF and RecO. This Laribacter hongkongensis (strain HLHK9) protein is Recombination protein RecR.